A 1018-amino-acid chain; its full sequence is Pikachurin (1018 aa).

The first 23 residues, Met1–Ala23, serve as a signal peptide directing secretion. Fibronectin type-III domains are found at residues Pro37–Gln145 and Ala153–Pro248. The N-linked (GlcNAc...) asparagine glycan is linked to Asn47. Positions Val228–Glu274 are disordered. Residues His231–Arg244 are compositionally biased toward polar residues. A compositionally biased stretch (acidic residues) spans Glu265–Glu274. Residues Phe352–Ser390 form the EGF-like 1 domain. 11 cysteine pairs are disulfide-bonded: Cys356/Cys367, Cys361/Cys378, Cys380/Cys389, Cys543/Cys573, Cys578/Cys589, Cys583/Cys599, Cys601/Cys610, Cys797/Cys808, Cys802/Cys817, Cys819/Cys828, and Cys988/Cys1015. The Laminin G-like 1 domain occupies Ile395–Cys573. 2 consecutive EGF-like domains span residues Ser574–Glu611 and Ala793–Gln829. The Laminin G-like 2 domain maps to Ile618–Cys797. The Laminin G-like 3 domain occupies Ile836 to Cys1015.

In terms of assembly, interacts with DAG1 alpha-dystroglycan. Interacts with GPR158 and GPR179; transsynaptic interaction is required for synaptic organization of photoreceptor cells. O-glycosylated; contains chondroitin sulfate and heparan sulfate.

It localises to the secreted. Its subcellular location is the extracellular space. The protein resides in the extracellular matrix. The protein localises to the synaptic cleft. It is found in the presynaptic active zone. Functionally, involved in both the retinal photoreceptor ribbon synapse formation and physiological functions of visual perception. Plays a key role in the synaptic organization of photoreceptors by mediating transsynaptic interaction between alpha-dystroglycan and GPR179 on the postsynaptic membrane. Necessary for proper bipolar dendritic tip apposition to the photoreceptor ribbon synapse. Promotes matrix assembly and cell adhesiveness. This chain is Pikachurin (EGFLAM), found in Bos taurus (Bovine).